Here is a 283-residue protein sequence, read N- to C-terminus: 1-deoxypentalenic acid 11-beta-hydroxylase (283 aa).

Position 117 (R117) interacts with substrate. Residues H135 and D137 each contribute to the Fe cation site. 2-oxoglutarate contacts are provided by residues 135 to 137 (HQD) and W151. Position 186 (R186) interacts with substrate. H224 provides a ligand contact to Fe cation. 2-oxoglutarate-binding residues include S226 and R238. Residues 251–283 (HRGFNALTPWPESAKDASKGIMSKITGTPTTAE) are disordered.

Belongs to the PhyH family. Fe cation is required as a cofactor. Requires L-ascorbate as cofactor.

It carries out the reaction 1-deoxypentalenate + 2-oxoglutarate + O2 = 1-deoxy-11beta-hydroxypentalenate + succinate + CO2. It participates in antibiotic biosynthesis; pentalenolactone biosynthesis. In terms of biological role, catalyzes the conversion of 1-deoxypentalenic acid to 11-beta-hydroxy-1-deoxypentalenic acid in the biosynthesis of pentalenolactone antibiotic. This chain is 1-deoxypentalenic acid 11-beta-hydroxylase (pntH), found in Streptomyces arenae.